The sequence spans 224 residues: ATP-dependent dethiobiotin synthetase BioD (224 aa).

Position 18 (Thr18) interacts with Mg(2+). Lys39 is a catalytic residue. Ser43 lines the substrate pocket. Residues Asp56 and Glu117 each contribute to the Mg(2+) site. ATP-binding positions include Asp56, 117–120 (EGVG), and 177–178 (NE).

Belongs to the dethiobiotin synthetase family. As to quaternary structure, homodimer. Mg(2+) serves as cofactor.

The protein resides in the cytoplasm. The catalysed reaction is (7R,8S)-7,8-diammoniononanoate + CO2 + ATP = (4R,5S)-dethiobiotin + ADP + phosphate + 3 H(+). It functions in the pathway cofactor biosynthesis; biotin biosynthesis; biotin from 7,8-diaminononanoate: step 1/2. In terms of biological role, catalyzes a mechanistically unusual reaction, the ATP-dependent insertion of CO2 between the N7 and N8 nitrogen atoms of 7,8-diaminopelargonic acid (DAPA, also called 7,8-diammoniononanoate) to form a ureido ring. The chain is ATP-dependent dethiobiotin synthetase BioD from Xanthomonas axonopodis pv. citri (strain 306).